The following is a 763-amino-acid chain: 5-methyltetrahydropteroyltriglutamate--homocysteine methyltransferase (763 aa).

Residues 16-19 and K114 each bind 5-methyltetrahydropteroyltri-L-glutamate; that span reads RELK. Residues 438 to 440 and E491 each bind L-homocysteine; that span reads IGS. Residues 438–440 and E491 contribute to the L-methionine site; that span reads IGS. Residues 522 to 523 and W568 contribute to the 5-methyltetrahydropteroyltri-L-glutamate site; that span reads RC. D606 is an L-homocysteine binding site. Residue D606 participates in L-methionine binding. E612 is a binding site for 5-methyltetrahydropteroyltri-L-glutamate. Zn(2+) is bound by residues H648, C650, and E672. H701 acts as the Proton donor in catalysis. Residue C733 coordinates Zn(2+).

It belongs to the vitamin-B12 independent methionine synthase family. The cofactor is Zn(2+).

It catalyses the reaction 5-methyltetrahydropteroyltri-L-glutamate + L-homocysteine = tetrahydropteroyltri-L-glutamate + L-methionine. Its pathway is amino-acid biosynthesis; L-methionine biosynthesis via de novo pathway; L-methionine from L-homocysteine (MetE route): step 1/1. Catalyzes the transfer of a methyl group from 5-methyltetrahydrofolate to homocysteine resulting in methionine formation. In Parvibaculum lavamentivorans (strain DS-1 / DSM 13023 / NCIMB 13966), this protein is 5-methyltetrahydropteroyltriglutamate--homocysteine methyltransferase.